The sequence spans 1277 residues: Clustered mitochondria protein 1 (1277 aa).

Disordered stretches follow at residues 19-39 and 148-176; these read LPKEDNHSHNTKHLKKTQSSK and LPLGPIKERSKQEEKDEKSDPEEKKNTFK. Over residues 27-36 the composition is skewed to basic residues; the sequence is HNTKHLKKTQ. The span at 153-176 shows a compositional bias: basic and acidic residues; it reads IKERSKQEEKDEKSDPEEKKNTFK. One can recognise a Clu domain in the interval 339–596; sequence PPNNPDYLRL…NTYPLDINFA (258 aa). TPR repeat units lie at residues 704–738, 1020–1053, and 1148–1181; these read GINMRYLGKIIELSQKELDSQIVHYEQNLKAVEQD, AEKYLSLSAIYNKLALYPEAIAFCRKACTIYERV, and GYTESRLGNLFAALKDFHRALEHITVTQGIFTKQ. The disordered stretch occupies residues 1212–1277; the sequence is LAQDQMSTTG…TNNKKKHGKK (66 aa). A compositionally biased stretch (basic and acidic residues) spans 1235–1249; the sequence is KKDDVKPELANKSVD. The residue at position 1247 (S1247) is a Phosphoserine. Over residues 1264–1277 the composition is skewed to basic residues; the sequence is SKNKTNNKKKHGKK.

It belongs to the CLU family. As to quaternary structure, may associate with the eukaryotic translation initiation factor 3 (eIF-3) complex. Associates with the 80S ribosome.

It localises to the cytoplasm. In terms of biological role, mRNA-binding protein involved in proper cytoplasmic distribution of mitochondria. The chain is Clustered mitochondria protein 1 from Saccharomyces cerevisiae (strain ATCC 204508 / S288c) (Baker's yeast).